Reading from the N-terminus, the 266-residue chain is Ribosomal RNA small subunit methyltransferase A (266 aa).

H13, L15, G40, E61, D85, and N104 together coordinate S-adenosyl-L-methionine.

It belongs to the class I-like SAM-binding methyltransferase superfamily. rRNA adenine N(6)-methyltransferase family. RsmA subfamily.

It is found in the cytoplasm. It carries out the reaction adenosine(1518)/adenosine(1519) in 16S rRNA + 4 S-adenosyl-L-methionine = N(6)-dimethyladenosine(1518)/N(6)-dimethyladenosine(1519) in 16S rRNA + 4 S-adenosyl-L-homocysteine + 4 H(+). In terms of biological role, specifically dimethylates two adjacent adenosines (A1518 and A1519) in the loop of a conserved hairpin near the 3'-end of 16S rRNA in the 30S particle. May play a critical role in biogenesis of 30S subunits. The chain is Ribosomal RNA small subunit methyltransferase A from Parabacteroides distasonis (strain ATCC 8503 / DSM 20701 / CIP 104284 / JCM 5825 / NCTC 11152).